We begin with the raw amino-acid sequence, 446 residues long: tRNA modification GTPase MnmE (446 aa).

(6S)-5-formyl-5,6,7,8-tetrahydrofolate is bound by residues Arg24, Glu81, and Lys120. Residues 216 to 368 enclose the TrmE-type G domain; that stretch reads GLHAVLIGPP…LHIRLRALAL (153 aa). Asn226 is a binding site for K(+). GTP contacts are provided by residues 226 to 231, 245 to 251, and 270 to 273; these read NAGKSS, TDVAGTT, and DTAG. Ser230 is a binding site for Mg(2+). K(+)-binding residues include Thr245, Val247, and Thr250. Mg(2+) is bound at residue Thr251. Lys446 is a binding site for (6S)-5-formyl-5,6,7,8-tetrahydrofolate.

This sequence belongs to the TRAFAC class TrmE-Era-EngA-EngB-Septin-like GTPase superfamily. TrmE GTPase family. In terms of assembly, homodimer. Heterotetramer of two MnmE and two MnmG subunits. K(+) serves as cofactor.

It localises to the cytoplasm. Exhibits a very high intrinsic GTPase hydrolysis rate. Involved in the addition of a carboxymethylaminomethyl (cmnm) group at the wobble position (U34) of certain tRNAs, forming tRNA-cmnm(5)s(2)U34. The sequence is that of tRNA modification GTPase MnmE from Xanthomonas euvesicatoria pv. vesicatoria (strain 85-10) (Xanthomonas campestris pv. vesicatoria).